The following is a 61-amino-acid chain: Pleurocidin-like peptide WF3 (61 aa).

Positions 1–22 (MKFTATFLVLSLVVLMAEPGEC) are cleaved as a signal peptide. Positions 48–61 (YDEQQELNKRAVDE) are excised as a propeptide.

It belongs to the pleurocidin family.

It is found in the secreted. Functionally, antimicrobial peptide. This Pseudopleuronectes americanus (Winter flounder) protein is Pleurocidin-like peptide WF3 (ple3).